Consider the following 202-residue polypeptide: dTTP/UTP pyrophosphatase (202 aa).

The active-site Proton acceptor is the Asp-76.

This sequence belongs to the Maf family. YhdE subfamily. A divalent metal cation serves as cofactor.

It localises to the cytoplasm. It catalyses the reaction dTTP + H2O = dTMP + diphosphate + H(+). The enzyme catalyses UTP + H2O = UMP + diphosphate + H(+). Nucleoside triphosphate pyrophosphatase that hydrolyzes dTTP and UTP. May have a dual role in cell division arrest and in preventing the incorporation of modified nucleotides into cellular nucleic acids. This chain is dTTP/UTP pyrophosphatase, found in Neisseria gonorrhoeae (strain ATCC 700825 / FA 1090).